The sequence spans 207 residues: Large ribosomal subunit protein uL4 (207 aa).

The tract at residues 44–78 is disordered; sequence QRQGTHDVKNRSEVRGGGRKPWRQKGTGRARQGSI. Residues 47-59 show a composition bias toward basic and acidic residues; it reads GTHDVKNRSEVRG. Positions 60 to 71 are enriched in basic residues; it reads GGRKPWRQKGTG.

The protein belongs to the universal ribosomal protein uL4 family. As to quaternary structure, part of the 50S ribosomal subunit.

One of the primary rRNA binding proteins, this protein initially binds near the 5'-end of the 23S rRNA. It is important during the early stages of 50S assembly. It makes multiple contacts with different domains of the 23S rRNA in the assembled 50S subunit and ribosome. In terms of biological role, forms part of the polypeptide exit tunnel. This chain is Large ribosomal subunit protein uL4, found in Brevibacillus brevis (strain 47 / JCM 6285 / NBRC 100599).